A 320-amino-acid chain; its full sequence is Malate dehydrogenase (320 aa).

Residues 10-15 (GAGMIG) and Asp-34 contribute to the NAD(+) site. 2 residues coordinate substrate: Arg-83 and Arg-89. NAD(+) contacts are provided by residues Asn-96 and 119–121 (ITN). Substrate contacts are provided by Asn-121 and Arg-152. His-176 acts as the Proton acceptor in catalysis.

It belongs to the LDH/MDH superfamily. MDH type 3 family.

It catalyses the reaction (S)-malate + NAD(+) = oxaloacetate + NADH + H(+). Its function is as follows. Catalyzes the reversible oxidation of malate to oxaloacetate. The polypeptide is Malate dehydrogenase (Caulobacter sp. (strain K31)).